A 378-amino-acid chain; its full sequence is Dual-specificity RNA methyltransferase RlmN (378 aa).

Glutamate 95 functions as the Proton acceptor in the catalytic mechanism. Residues 101–345 (EETRGTLCVS…TTIRKTRGDD (245 aa)) enclose the Radical SAM core domain. Cysteine 108 and cysteine 350 are joined by a disulfide. Residues cysteine 115, cysteine 119, and cysteine 122 each coordinate [4Fe-4S] cluster. Residues 176 to 177 (GE), serine 208, 230 to 232 (SLH), and asparagine 307 contribute to the S-adenosyl-L-methionine site. Cysteine 350 functions as the S-methylcysteine intermediate in the catalytic mechanism.

It belongs to the radical SAM superfamily. RlmN family. The cofactor is [4Fe-4S] cluster.

It is found in the cytoplasm. The catalysed reaction is adenosine(2503) in 23S rRNA + 2 reduced [2Fe-2S]-[ferredoxin] + 2 S-adenosyl-L-methionine = 2-methyladenosine(2503) in 23S rRNA + 5'-deoxyadenosine + L-methionine + 2 oxidized [2Fe-2S]-[ferredoxin] + S-adenosyl-L-homocysteine. It catalyses the reaction adenosine(37) in tRNA + 2 reduced [2Fe-2S]-[ferredoxin] + 2 S-adenosyl-L-methionine = 2-methyladenosine(37) in tRNA + 5'-deoxyadenosine + L-methionine + 2 oxidized [2Fe-2S]-[ferredoxin] + S-adenosyl-L-homocysteine. Specifically methylates position 2 of adenine 2503 in 23S rRNA and position 2 of adenine 37 in tRNAs. m2A2503 modification seems to play a crucial role in the proofreading step occurring at the peptidyl transferase center and thus would serve to optimize ribosomal fidelity. This Burkholderia pseudomallei (strain K96243) protein is Dual-specificity RNA methyltransferase RlmN.